Consider the following 286-residue polypeptide: 2-hydroxy-6-oxo-6-phenylhexa-2,4-dienoate hydrolase (286 aa).

In terms of domain architecture, AB hydrolase-1 spans 36–271; the sequence is VIMLHGGGPG…RCGHWAQWEH (236 aa). Substrate is bound by residues 42–43, N51, N111, S180, and R190; that span reads GG. The Proton acceptor role is filled by H265. W266 provides a ligand contact to substrate.

It belongs to the AB hydrolase superfamily. BphD family. In terms of assembly, homodimer.

The enzyme catalyses 2,6-dioxo-6-phenylhexa-3-enoate + H2O = 2-oxopent-4-enoate + benzoate + H(+). It functions in the pathway xenobiotic degradation; biphenyl degradation; 2-hydroxy-2,4-pentadienoate and benzoate from biphenyl: step 4/4. Catalyzes an unusual C-C bond hydrolysis of 2-hydroxy-6-oxo-6-phenylhexa-2,4-dienoic acid (HOPDA) to produce benzoic acid and 2-hydroxy-2,4-pentadienoic acid (HPD). In Burkholderia cepacia (Pseudomonas cepacia), this protein is 2-hydroxy-6-oxo-6-phenylhexa-2,4-dienoate hydrolase.